Here is a 442-residue protein sequence, read N- to C-terminus: GTPase Der (442 aa).

EngA-type G domains follow at residues 3 to 167 (PTIV…PPDV) and 177 to 350 (PRIA…AAAM). Residues 9–16 (GRPNVGKS), 56–60 (DTAGF), 119–122 (NKSE), 183–190 (GRPNVGKS), 230–234 (DTAGL), and 295–298 (NKWD) contribute to the GTP site. One can recognise a KH-like domain in the interval 351 to 435 (VNLSTPRLTR…PLRIQFRTAH (85 aa)).

Belongs to the TRAFAC class TrmE-Era-EngA-EngB-Septin-like GTPase superfamily. EngA (Der) GTPase family. In terms of assembly, associates with the 50S ribosomal subunit.

GTPase that plays an essential role in the late steps of ribosome biogenesis. This Aromatoleum aromaticum (strain DSM 19018 / LMG 30748 / EbN1) (Azoarcus sp. (strain EbN1)) protein is GTPase Der.